The primary structure comprises 219 residues: PRELI domain-containing protein 1, mitochondrial (219 aa).

A PRELI/MSF1 domain is found at Thr36–Pro174.

In terms of assembly, forms a complex with TRIAP1 in the mitochondrion intermembrane space. Interacts with OPA1 and AIFM1. In terms of tissue distribution, highly expressed in fetal liver; less expressed in fetal brain, lung, and kidney. At the adult stage, expression is drastically reduced in the liver but highly expressed in the spleen, brain, lung, lymph nodes and peripheral blood leukocytes.

The protein localises to the mitochondrion. It localises to the mitochondrion intermembrane space. It catalyses the reaction a 1,2-diacyl-sn-glycero-3-phosphate(in) = a 1,2-diacyl-sn-glycero-3-phosphate(out). Involved in the modulation of the mitochondrial apoptotic pathway by ensuring the accumulation of cardiolipin (CL) in mitochondrial membranes. In vitro, the TRIAP1:PRELID1 complex mediates the transfer of phosphatidic acid (PA) between liposomes and probably functions as a PA transporter across the mitochondrion intermembrane space to provide PA for CL synthesis in the inner membrane. Regulates the mitochondrial apoptotic pathway in primary Th cells. Regulates Th cell differentiation by down-regulating STAT6 thereby reducing IL-4-induced Th2 cell number. May be important for the development of vital and immunocompetent organs. The sequence is that of PRELI domain-containing protein 1, mitochondrial (PRELID1) from Homo sapiens (Human).